Here is a 348-residue protein sequence, read N- to C-terminus: Killer cell immunoglobulin-like receptor 2DL1 (348 aa).

Residues 1–21 (MSLLVVSMACVGFFLLQGAWP) form the signal peptide. Residues 22 to 245 (HEGVHRKPSL…SKTGNPRHLH (224 aa)) are Extracellular-facing. Ig-like C2-type domains lie at 42–107 (EETV…VTHS) and 142–205 (GENV…FHDS). Cysteine 49 and cysteine 100 are joined by a disulfide. Residues asparagine 67, asparagine 84, asparagine 144, and asparagine 178 are each glycosylated (N-linked (GlcNAc...) asparagine). The cysteines at positions 149 and 198 are disulfide-linked. The interval 220 to 239 (VTGNPSNSWPSPTEPSSKTG) is disordered. Residues 246 to 264 (ILIGTSVVIILFILLFFLL) traverse the membrane as a helical segment. Topologically, residues 265–348 (HRWCSNKKNA…ESRSKVVSCP (84 aa)) are cytoplasmic.

Belongs to the immunoglobulin superfamily. Interacts with ARRB2. Interacts with PTPN6; the interaction is enhanced by ARRB2. Interacts with PTPN11; the interaction is enhanced by ARRB2. Expressed by NK cells.

It localises to the cell membrane. Receptor on natural killer (NK) cells for some HLA-C alleles such as w4 and w6. Inhibits the activity of NK cells thus preventing cell lysis. This is Killer cell immunoglobulin-like receptor 2DL1 from Homo sapiens (Human).